The primary structure comprises 449 residues: Phosphoglucosamine mutase (449 aa).

The active-site Phosphoserine intermediate is the S100. Residues S100, D241, D243, and D245 each coordinate Mg(2+). S100 is subject to Phosphoserine.

It belongs to the phosphohexose mutase family. The cofactor is Mg(2+). In terms of processing, activated by phosphorylation.

The enzyme catalyses alpha-D-glucosamine 1-phosphate = D-glucosamine 6-phosphate. Its function is as follows. Catalyzes the conversion of glucosamine-6-phosphate to glucosamine-1-phosphate. The sequence is that of Phosphoglucosamine mutase from Caldicellulosiruptor bescii (strain ATCC BAA-1888 / DSM 6725 / KCTC 15123 / Z-1320) (Anaerocellum thermophilum).